We begin with the raw amino-acid sequence, 477 residues long: Bifunctional protein HldE (477 aa).

The ribokinase stretch occupies residues 1–319 (MTPPLPGFRD…AALGGGPAPA (319 aa)). An ATP-binding site is contributed by 195 to 198 (NLAE). D264 is an active-site residue. Residues 346–477 (MTNGCFDLLH…DLIARIRSRG (132 aa)) are cytidylyltransferase.

The protein in the N-terminal section; belongs to the carbohydrate kinase PfkB family. This sequence in the C-terminal section; belongs to the cytidylyltransferase family. As to quaternary structure, homodimer.

It carries out the reaction D-glycero-beta-D-manno-heptose 7-phosphate + ATP = D-glycero-beta-D-manno-heptose 1,7-bisphosphate + ADP + H(+). The catalysed reaction is D-glycero-beta-D-manno-heptose 1-phosphate + ATP + H(+) = ADP-D-glycero-beta-D-manno-heptose + diphosphate. Its pathway is nucleotide-sugar biosynthesis; ADP-L-glycero-beta-D-manno-heptose biosynthesis; ADP-L-glycero-beta-D-manno-heptose from D-glycero-beta-D-manno-heptose 7-phosphate: step 1/4. The protein operates within nucleotide-sugar biosynthesis; ADP-L-glycero-beta-D-manno-heptose biosynthesis; ADP-L-glycero-beta-D-manno-heptose from D-glycero-beta-D-manno-heptose 7-phosphate: step 3/4. Its function is as follows. Catalyzes the phosphorylation of D-glycero-D-manno-heptose 7-phosphate at the C-1 position to selectively form D-glycero-beta-D-manno-heptose-1,7-bisphosphate. Catalyzes the ADP transfer from ATP to D-glycero-beta-D-manno-heptose 1-phosphate, yielding ADP-D-glycero-beta-D-manno-heptose. The sequence is that of Bifunctional protein HldE from Halorhodospira halophila (strain DSM 244 / SL1) (Ectothiorhodospira halophila (strain DSM 244 / SL1)).